An 81-amino-acid polypeptide reads, in one-letter code: Albumin-1 (81 aa).

Residues 27 to 34 (LSSVAKMI) constitute a propeptide that is removed on maturation.

Post-translationally, three disulfide bonds are probably present. The C-terminal glycine may be removed from A1b.

In terms of biological role, A1b binds to basic 7S globulin (BG) and stimulates its phosphorylation activity. The protein is Albumin-1 (LEG1) of Lupinus angustifolius (Narrow-leaved blue lupine).